The chain runs to 272 residues: 3-methyl-2-oxobutanoate hydroxymethyltransferase (272 aa).

Mg(2+)-binding residues include D51 and D90. 3-methyl-2-oxobutanoate contacts are provided by residues 51–52 (DS), D90, and K119. E121 contacts Mg(2+). Residue E188 is the Proton acceptor of the active site.

This sequence belongs to the PanB family. In terms of assembly, homodecamer; pentamer of dimers. Mg(2+) is required as a cofactor.

The protein localises to the cytoplasm. It carries out the reaction 3-methyl-2-oxobutanoate + (6R)-5,10-methylene-5,6,7,8-tetrahydrofolate + H2O = 2-dehydropantoate + (6S)-5,6,7,8-tetrahydrofolate. Its pathway is cofactor biosynthesis; (R)-pantothenate biosynthesis; (R)-pantoate from 3-methyl-2-oxobutanoate: step 1/2. In terms of biological role, catalyzes the reversible reaction in which hydroxymethyl group from 5,10-methylenetetrahydrofolate is transferred onto alpha-ketoisovalerate to form ketopantoate. This Dechloromonas aromatica (strain RCB) protein is 3-methyl-2-oxobutanoate hydroxymethyltransferase.